The following is a 357-amino-acid chain: Quinolinate synthase (357 aa).

Residues H50 and S71 each contribute to the iminosuccinate site. Position 116 (C116) interacts with [4Fe-4S] cluster. Residues 142 to 144 (YAN) and S159 each bind iminosuccinate. C203 provides a ligand contact to [4Fe-4S] cluster. Iminosuccinate-binding positions include 229–231 (HPE) and T246. C300 provides a ligand contact to [4Fe-4S] cluster.

Belongs to the quinolinate synthase family. Type 1 subfamily. [4Fe-4S] cluster serves as cofactor.

Its subcellular location is the cytoplasm. It catalyses the reaction iminosuccinate + dihydroxyacetone phosphate = quinolinate + phosphate + 2 H2O + H(+). It participates in cofactor biosynthesis; NAD(+) biosynthesis; quinolinate from iminoaspartate: step 1/1. Its function is as follows. Catalyzes the condensation of iminoaspartate with dihydroxyacetone phosphate to form quinolinate. The sequence is that of Quinolinate synthase from Shewanella oneidensis (strain ATCC 700550 / JCM 31522 / CIP 106686 / LMG 19005 / NCIMB 14063 / MR-1).